Reading from the N-terminus, the 293-residue chain is 16S rRNA (guanine(1405)-N(7))-methyltransferase (293 aa).

S-adenosyl-L-methionine contacts are provided by residues phenylalanine 47, 80 to 82 (HAS), arginine 86, alanine 111, aspartate 134, 160 to 161 (DL), leucine 176, and glutamine 185. The segment covering 258 to 274 (GRPAPAEGAAEPGATRP) has biased composition (low complexity). A disordered region spans residues 258 to 293 (GRPAPAEGAAEPGATRPVVDVPATARPDADRVDPTG). Over residues 284-293 (PDADRVDPTG) the composition is skewed to basic and acidic residues.

The protein belongs to the methyltransferase superfamily. Aminoglycoside resistance family.

The catalysed reaction is guanosine(1405) in 16S rRNA + S-adenosyl-L-methionine = N(7)-methylguanosine(1405) in 16S rRNA + S-adenosyl-L-homocysteine. Functionally, specifically methylates the N(7) position of guanine 1405 in 16S rRNA. Confers resistance to aminoglycosides. The chain is 16S rRNA (guanine(1405)-N(7))-methyltransferase (fmrO) from Micromonospora olivasterospora.